The primary structure comprises 275 residues: S-formylglutathione hydrolase (275 aa).

Active-site charge relay system residues include serine 145, aspartate 221, and histidine 254.

This sequence belongs to the esterase D family.

The enzyme catalyses S-formylglutathione + H2O = formate + glutathione + H(+). Its function is as follows. Serine hydrolase involved in the detoxification of formaldehyde. Hydrolyzes S-formylglutathione to glutathione and formate. The chain is S-formylglutathione hydrolase from Haemophilus influenzae (strain ATCC 51907 / DSM 11121 / KW20 / Rd).